A 240-amino-acid polypeptide reads, in one-letter code: NAD-dependent protein deacylase Sir2 (240 aa).

The Deacetylase sirtuin-type domain maps to 1–235 (MQVTVLSGAG…PTLLQRLPEL (235 aa)). NAD(+) is bound at residue 8-28 (GAGISAESGVPTFRDAETGLW). Positions 53 and 56 each coordinate substrate. 86–89 (QNID) serves as a coordination point for NAD(+). Residue His104 is the Proton acceptor of the active site. Residues Cys112, Cys115, Cys138, and Cys140 each coordinate Zn(2+). NAD(+) is bound by residues 177–179 (GTS), 203–205 (NPE), and Ala221.

Belongs to the sirtuin family. Class III subfamily. Interacts with both Ku and LigD; may form a trimeric complex during NHEJ. It depends on Zn(2+) as a cofactor.

It is found in the cytoplasm. It carries out the reaction N(6)-succinyl-L-lysyl-[protein] + NAD(+) + H2O = 2''-O-succinyl-ADP-D-ribose + nicotinamide + L-lysyl-[protein]. The enzyme catalyses N(6)-acetyl-L-lysyl-[protein] + NAD(+) + H2O = 2''-O-acetyl-ADP-D-ribose + nicotinamide + L-lysyl-[protein]. Its function is as follows. NAD-dependent lysine deacetylase and desuccinylase that specifically removes acetyl and succinyl groups on target proteins. Modulates the activities of several proteins which are inactive in their acylated form. In terms of biological role, involved in non-homologous end joining (NHEJ) repair of blunt, 5' overhang and 3' overhang DNA double strand breaks (DSB). Overexpression increases the efficiency of NHEJ of the above DSBs 2-fold with no effect on repair fidelity. This Mycolicibacterium smegmatis (strain ATCC 700084 / mc(2)155) (Mycobacterium smegmatis) protein is NAD-dependent protein deacylase Sir2 (sir2).